The chain runs to 378 residues: Transcription initiation factor IIA subunit 1 (378 aa).

An N-acetylalanine modification is found at alanine 2. 3 stretches are compositionally biased toward low complexity: residues glutamine 69–glutamine 79, glutamine 89–valine 106, and proline 247–threonine 281. 2 disordered regions span residues glutamine 69–isoleucine 108 and proline 247–phenylalanine 331. Phosphoserine; by TAF1 is present on residues serine 282, serine 283, serine 318, and serine 323. A compositionally biased stretch (acidic residues) spans serine 282–phenylalanine 331. Histidine 345 and arginine 346 together coordinate DNA.

This sequence belongs to the TFIIA subunit 1 family. TFIIA is a heterodimer of the large unprocessed subunit 1 and a small subunit gamma. It was originally believed to be a heterotrimer of an alpha (p35), a beta (p19) and a gamma subunit (p12). TFIIA forms a complex with TBP. Part of TBP-based Pol II pre-initiation complex (PIC), in which Pol II core assembles with general transcription factors and other specific initiation factors including GTF2E1, GTF2E2, GTF2F1, GTF2F2, TCEA1, ERCC2, ERCC3, GTF2H2, GTF2H3, GTF2H4, GTF2H5, GTF2A1, GTF2A2, GTF2B and TBP; this large multi-subunit PIC complex mediates DNA unwinding and targets Pol II core to the transcription start site where the first phosphodiester bond forms. Post-translationally, the alpha and beta subunits are postranslationally produced from the precursor form by TASP1. The cleavage promotes proteasomal degradation. As to expression, expressed in pachytene spermatocytes and spermatids.

Its subcellular location is the nucleus. TFIIA is a component of the transcription machinery of RNA polymerase II and plays an important role in transcriptional activation. TFIIA in a complex with TBP mediates transcriptional activity. The sequence is that of Transcription initiation factor IIA subunit 1 (Gtf2a1) from Mus musculus (Mouse).